A 312-amino-acid chain; its full sequence is Ribosomal RNA small subunit methyltransferase H (312 aa).

Residues Ala-33–His-35, Asp-52, Phe-79, Asp-100, and Gln-107 contribute to the S-adenosyl-L-methionine site.

Belongs to the methyltransferase superfamily. RsmH family.

It is found in the cytoplasm. The enzyme catalyses cytidine(1402) in 16S rRNA + S-adenosyl-L-methionine = N(4)-methylcytidine(1402) in 16S rRNA + S-adenosyl-L-homocysteine + H(+). In terms of biological role, specifically methylates the N4 position of cytidine in position 1402 (C1402) of 16S rRNA. The polypeptide is Ribosomal RNA small subunit methyltransferase H (Finegoldia magna (strain ATCC 29328 / DSM 20472 / WAL 2508) (Peptostreptococcus magnus)).